The chain runs to 348 residues: Fe(3+) ions import ATP-binding protein FbpC (348 aa).

The ABC transporter domain maps to Val7–Met237. An ATP-binding site is contributed by Gly39 to Thr46.

It belongs to the ABC transporter superfamily. Fe(3+) ion importer (TC 3.A.1.10) family. The complex is composed of two ATP-binding proteins (FbpC), two transmembrane proteins (FbpB) and a solute-binding protein (FbpA).

The protein localises to the cell inner membrane. It catalyses the reaction Fe(3+)(out) + ATP + H2O = Fe(3+)(in) + ADP + phosphate + H(+). Functionally, part of the ABC transporter complex FbpABC involved in Fe(3+) ions import. Responsible for energy coupling to the transport system. The sequence is that of Fe(3+) ions import ATP-binding protein FbpC from Escherichia coli (strain K12).